The chain runs to 473 residues: Mogroside IIIx synthase (473 aa).

Catalysis depends on histidine 43, which acts as the Proton acceptor. Aspartate 142 functions as the Charge relay in the catalytic mechanism. Residues serine 293, glutamine 356, tryptophan 374, asparagine 375, serine 376, glutamate 379, aspartate 395, and glutamine 396 each contribute to the UDP-alpha-D-glucose site.

Belongs to the UDP-glycosyltransferase family. As to expression, highly expressed in mature fruits.

It carries out the reaction mogroside IIE + UDP-alpha-D-glucose = mogroside IIIX + UDP + H(+). It catalyses the reaction mogroside III + UDP-alpha-D-glucose = mogroside IV + UDP + H(+). The enzyme catalyses mogroside III + UDP-alpha-D-glucose = siamenoside I + UDP + H(+). The catalysed reaction is mogroside IIIX + UDP-alpha-D-glucose = mogroside IVA + UDP + H(+). It carries out the reaction mogroside IIIX + UDP-alpha-D-glucose = siamenoside I + UDP + H(+). It catalyses the reaction mogroside IV + UDP-alpha-D-glucose = mogroside V + UDP + H(+). The enzyme catalyses siamenoside I + UDP-alpha-D-glucose = mogroside V + UDP + H(+). The catalysed reaction is mogroside V + UDP-alpha-D-glucose = mogroside VI + UDP + H(+). It participates in secondary metabolite biosynthesis; terpenoid biosynthesis. Its activity is regulated as follows. Activity is increased by Mg(2+). UDP-glycosyltransferase involved in the biosynthesis of cucurbitacin and mogroside tetracyclic triterpene natural products (e.g. siamenoside I and mogrosides IV, V and VI). Cucurbitacins have cytotoxic properties and exhibit deterrent taste as a defense barrier against herbivores. Mogrosides are nonsugar highly oxygenated compounds used as high-intensity zero-calorie sweeteners; they also possess pharmacological properties such as regulating immunity, lowering blood sugar and lipid levels, protecting the liver, and acting as antioxidants and antitumor agents. Its function is as follows. Catalyzes the branched glucosylations of mogroside II-E, mogroside III, mogroside IIIx, mogroside IV, mogroside IV-A, siamenoside I and mogroside V, ending in the production of mogroside VI. Functionally, catalyzes the beta(1-6) branched glucosylations of mogroside II-E to produce mogroside IIIx by forming a beta(1-6) glycosidic bond with the 6-hydroxyl of glucose 1-C24; a subsequent glycosylation at glucose 1-C3 leads to the formation of mogroside IV-A with beta(1-6) glycosidic bond. Can also use mogroside III-E, mogroside III-A, mogroside IV-E and mogroside IV-A as substrates. This is Mogroside IIIx synthase from Siraitia grosvenorii (Monk's fruit).